We begin with the raw amino-acid sequence, 245 residues long: tRNA pseudouridine synthase A (245 aa).

The Nucleophile role is filled by aspartate 52. Residue tyrosine 110 participates in substrate binding.

Belongs to the tRNA pseudouridine synthase TruA family. As to quaternary structure, homodimer.

It catalyses the reaction uridine(38/39/40) in tRNA = pseudouridine(38/39/40) in tRNA. Functionally, formation of pseudouridine at positions 38, 39 and 40 in the anticodon stem and loop of transfer RNAs. The chain is tRNA pseudouridine synthase A from Borrelia duttonii (strain Ly).